The chain runs to 84 residues: Mu-conotoxin-like Cal 12.2b (84 aa).

The signal sequence occupies residues 1 to 19 (MKLTCVLVVLLLVLPFGDL). A propeptide spanning residues 20-42 (ITTSNTEDNKRGATPWQNSLKAR) is cleaved from the precursor. 4 cysteine pairs are disulfide-bonded: Cys45–Cys57, Cys52–Cys65, Cys59–Cys70, and Cys64–Cys76. A 6'-bromotryptophan modification is found at Trp72. Pro77 bears the 4-hydroxyproline mark. Trp81 is subject to 6'-bromotryptophan.

It belongs to the conotoxin O1 superfamily. Expressed by the venom duct.

It localises to the secreted. Functionally, mu-conotoxins block voltage-gated sodium channels. This toxin reversibly blocks voltage-gated sodium channel in cephalopods, with no alteration in the voltage dependence of sodium conductance or on the kinetics of inactivation. This Californiconus californicus (California cone) protein is Mu-conotoxin-like Cal 12.2b.